The following is a 159-amino-acid chain: C-type lectin 1 (159 aa).

The first 23 residues, 1-23 (MGRFIFISFGLLVVFFFLSGAKG), serve as a signal peptide directing secretion. 4 disulfides stabilise this stretch: C26–C37, C54–C155, C61–C157, and C130–C147. The C-type lectin domain occupies 33–156 (MYGLCYKIFD…CKVKNAFLCQ (124 aa)). N118 carries N-linked (GlcNAc...) asparagine glycosylation. Positions 119–121 (LTD) match the Sugar-binding motif. Ca(2+) contacts are provided by D121, D127, and N143.

It belongs to the true venom lectin family. In terms of assembly, homodimer; disulfide-linked. Expressed by the venom gland.

It is found in the secreted. Functionally, lectin which recognizes specific carbohydrate structures and agglutinates a variety of animal cells by binding to cell-surface glycoproteins and glycolipids. May be a calcium-dependent lectin. This is C-type lectin 1 from Bitis gabonica (Gaboon adder).